A 292-amino-acid chain; its full sequence is Short chain dehydrogenase mpl6 (292 aa).

NADP(+)-binding residues include Val-37, Asp-95, Asn-122, Arg-156, Tyr-188, Lys-192, Val-221, and Thr-223. The active-site Proton donor is Tyr-188. The Lowers pKa of active site Tyr role is filled by Lys-192.

The protein belongs to the short-chain dehydrogenases/reductases (SDR) family.

The protein operates within mycotoxin biosynthesis. In terms of biological role, short chain dehydrogenase; part of the gene cluster that mediates the biosynthesis of the mycotoxin citrinin, a hepato-nephrotoxic compound to humans due to inhibition of respiration complex III. The pathway begins with the synthesis of a keto-aldehyde intermediate by the citrinin PKS (pksCT) from successive condensations of 4 malonyl-CoA units, presumably with a simple acetyl-CoA starter unit. Release of the keto-aldehyde intermediate is consistent with the presence of the C-terminal reductive release domain. Mp11 collaborates with pksCT by catalyzing the hydrolysis of ACP-bound acyl intermediates to free the ACP from stalled intermediates. Mpl2 then catalyzes the oxidation of the C-12 methyl of the ketone intermediate to an alcohol intermediate which is further oxidized by the oxidoreductase mpl7 to produce a bisaldehyde intermediate. The fourth catalytic step is catalyzed by the mpl4 aldehyde dehydrogenase. The final transformation is the reduction of C-3 by mpl6 to provide the chemically stable citrinin nucleus. The polypeptide is Short chain dehydrogenase mpl6 (Monascus purpureus (Red mold)).